A 371-amino-acid polypeptide reads, in one-letter code: MAPSHVDKVNTRTWSASIVFMVLTFVNVSVHLVLSNFPHLGYPCVYYHVVDFERLNMSAYNVMHLHTPMLFLDSVQLVCYAVFMQLVFLAVTIYYLVCWIKISMRKDKGMSLNQSTRDISYMGDSLTAFLFILSMDTFQLFTLTMSFRLPSMIAFMAAVHFFCLTIFNVSMVTQYRSYKRSLFFFSRLHPKLKGTVQFRTLIVNLVEVALGFNTTVVAMALCYGFGNNFFVRTGHMVLAVFVVYAIISIIYFLLIEAVFFQYVKVQFGYHLGAFFGLCGLIYPIVQYDTFLSNEYRTGISWSFGMLFFIWAMFTTCRAVRYFRGRGSGSVKYQALATASGEEVAALSHHDSLESRRLREEEDDDDEDFEDA.

The Intravirion portion of the chain corresponds to 1 to 13 (MAPSHVDKVNTRT). A helical membrane pass occupies residues 14-34 (WSASIVFMVLTFVNVSVHLVL). Residues 35 to 79 (SNFPHLGYPCVYYHVVDFERLNMSAYNVMHLHTPMLFLDSVQLVC) lie on the Virion surface side of the membrane. The helical transmembrane segment at 80–100 (YAVFMQLVFLAVTIYYLVCWI) threads the bilayer. Residues 101–126 (KISMRKDKGMSLNQSTRDISYMGDSL) are Intravirion-facing. The chain crosses the membrane as a helical span at residues 127–147 (TAFLFILSMDTFQLFTLTMSF). Residues 148-151 (RLPS) lie on the Virion surface side of the membrane. The helical transmembrane segment at 152 to 172 (MIAFMAAVHFFCLTIFNVSMV) threads the bilayer. Over 173-200 (TQYRSYKRSLFFFSRLHPKLKGTVQFRT) the chain is Intravirion. The helical transmembrane segment at 201-221 (LIVNLVEVALGFNTTVVAMAL) threads the bilayer. Topologically, residues 222 to 239 (CYGFGNNFFVRTGHMVLA) are virion surface. Residues 240-260 (VFVVYAIISIIYFLLIEAVFF) form a helical membrane-spanning segment. At 261-264 (QYVK) the chain is on the intravirion side. A helical transmembrane segment spans residues 265–285 (VQFGYHLGAFFGLCGLIYPIV). At 286 to 298 (QYDTFLSNEYRTG) the chain is on the virion surface side. Residues 299-319 (ISWSFGMLFFIWAMFTTCRAV) traverse the membrane as a helical segment. Residues 320–371 (RYFRGRGSGSVKYQALATASGEEVAALSHHDSLESRRLREEEDDDDEDFEDA) lie on the Intravirion side of the membrane. Residues 346–371 (LSHHDSLESRRLREEEDDDDEDFEDA) form a disordered region. The segment covering 347–359 (SHHDSLESRRLRE) has biased composition (basic and acidic residues). A compositionally biased stretch (acidic residues) spans 360 to 371 (EEDDDDEDFEDA).

This sequence belongs to the herpesviridae glycoprotein M family. In terms of assembly, interacts (via N-terminus) with gN (via N-terminus). The gM-gN heterodimer forms the gCII complex.

It is found in the virion membrane. Its subcellular location is the host Golgi apparatus. It localises to the host trans-Golgi network. The protein resides in the host endosome membrane. The protein localises to the host nucleus inner membrane. Its function is as follows. Envelope glycoprotein important for virion assembly and egress. Plays a role in the correct incorporation of gH-gL into virion membrane. Directs the glycoprotein N (gN) to the host trans-Golgi network. This chain is Envelope glycoprotein M, found in Homo sapiens (Human).